A 218-amino-acid polypeptide reads, in one-letter code: Cytochrome b6 (218 aa).

A helical transmembrane segment spans residues 35-55 (IFYCLGGITLVCFLIQFATGF). Residue cysteine 38 coordinates heme c. Residues histidine 89 and histidine 103 each coordinate heme b. A run of 3 helical transmembrane segments spans residues 93-113 (ASMM…TGGF), 119-139 (LTWV…VTGY), and 189-209 (LHTF…FLMI). Histidine 190 and histidine 205 together coordinate heme b.

The protein belongs to the cytochrome b family. PetB subfamily. In terms of assembly, the 4 large subunits of the cytochrome b6-f complex are cytochrome b6, subunit IV (17 kDa polypeptide, PetD), cytochrome f and the Rieske protein, while the 4 small subunits are PetG, PetL, PetM and PetN. The complex functions as a dimer. It depends on heme b as a cofactor. Requires heme c as cofactor.

It localises to the cellular thylakoid membrane. Its function is as follows. Component of the cytochrome b6-f complex, which mediates electron transfer between photosystem II (PSII) and photosystem I (PSI), cyclic electron flow around PSI, and state transitions. This Prochlorococcus marinus subsp. pastoris (strain CCMP1986 / NIES-2087 / MED4) protein is Cytochrome b6.